The chain runs to 485 residues: Protein nucleotidyltransferase YdiU (485 aa).

Residues G90, G92, R93, K113, D125, G126, R176, and R183 each coordinate ATP. The Proton acceptor role is filled by D252. Positions 253 and 262 each coordinate Mg(2+). D262 contributes to the ATP binding site.

This sequence belongs to the SELO family. It depends on Mg(2+) as a cofactor. Mn(2+) is required as a cofactor.

The enzyme catalyses L-seryl-[protein] + ATP = 3-O-(5'-adenylyl)-L-seryl-[protein] + diphosphate. It carries out the reaction L-threonyl-[protein] + ATP = 3-O-(5'-adenylyl)-L-threonyl-[protein] + diphosphate. The catalysed reaction is L-tyrosyl-[protein] + ATP = O-(5'-adenylyl)-L-tyrosyl-[protein] + diphosphate. It catalyses the reaction L-histidyl-[protein] + UTP = N(tele)-(5'-uridylyl)-L-histidyl-[protein] + diphosphate. The enzyme catalyses L-seryl-[protein] + UTP = O-(5'-uridylyl)-L-seryl-[protein] + diphosphate. It carries out the reaction L-tyrosyl-[protein] + UTP = O-(5'-uridylyl)-L-tyrosyl-[protein] + diphosphate. Functionally, nucleotidyltransferase involved in the post-translational modification of proteins. It can catalyze the addition of adenosine monophosphate (AMP) or uridine monophosphate (UMP) to a protein, resulting in modifications known as AMPylation and UMPylation. This is Protein nucleotidyltransferase YdiU from Vibrio atlanticus (strain LGP32) (Vibrio splendidus (strain Mel32)).